Consider the following 480-residue polypeptide: Glycogen synthase (480 aa).

Lys-15 provides a ligand contact to ADP-alpha-D-glucose.

It belongs to the glycosyltransferase 1 family. Bacterial/plant glycogen synthase subfamily.

It carries out the reaction [(1-&gt;4)-alpha-D-glucosyl](n) + ADP-alpha-D-glucose = [(1-&gt;4)-alpha-D-glucosyl](n+1) + ADP + H(+). It participates in glycan biosynthesis; glycogen biosynthesis. In terms of biological role, synthesizes alpha-1,4-glucan chains using ADP-glucose. This Rhizobium leguminosarum bv. trifolii (strain WSM2304) protein is Glycogen synthase.